The sequence spans 596 residues: Actin-related protein 9 (596 aa).

The interval L148–E178 is disordered.

Belongs to the actin family. ARP8 subfamily.

The polypeptide is Actin-related protein 9 (ARP9) (Arabidopsis thaliana (Mouse-ear cress)).